The sequence spans 352 residues: Photosystem II D2 protein (352 aa).

A helical transmembrane segment spans residues 40 to 60 (TAYLALGGWLTGTTFVTSWYT). A chlorophyll a-binding site is contributed by histidine 117. A helical membrane pass occupies residues 124–140 (GFMLRQFEIARLVGIRP). Pheophytin a-binding residues include glutamine 129 and asparagine 142. Residues 152–165 (VFVSVFLIYPLGQS) form a helical membrane-spanning segment. Histidine 197 contacts chlorophyll a. Residues 207-227 (GALLCAIHGATVENTLFEDGE) traverse the membrane as a helical segment. A plastoquinone contacts are provided by histidine 214 and phenylalanine 261. Histidine 214 is a Fe cation binding site. Histidine 268 serves as a coordination point for Fe cation. The helical transmembrane segment at 278–294 (GLWTSSIGIIGLALNLR) threads the bilayer.

This sequence belongs to the reaction center PufL/M/PsbA/D family. As to quaternary structure, PSII is composed of 1 copy each of membrane proteins PsbA, PsbB, PsbC, PsbD, PsbE, PsbF, PsbH, PsbI, PsbJ, PsbK, PsbL, PsbM, PsbT, PsbX, PsbY, PsbZ, Psb30/Ycf12, at least 3 peripheral proteins of the oxygen-evolving complex and a large number of cofactors. It forms dimeric complexes. The cofactor is The D1/D2 heterodimer binds P680, chlorophylls that are the primary electron donor of PSII, and subsequent electron acceptors. It shares a non-heme iron and each subunit binds pheophytin, quinone, additional chlorophylls, carotenoids and lipids. There is also a Cl(-1) ion associated with D1 and D2, which is required for oxygen evolution. The PSII complex binds additional chlorophylls, carotenoids and specific lipids..

The protein localises to the plastid. Its subcellular location is the organellar chromatophore thylakoid membrane. The catalysed reaction is 2 a plastoquinone + 4 hnu + 2 H2O = 2 a plastoquinol + O2. Photosystem II (PSII) is a light-driven water:plastoquinone oxidoreductase that uses light energy to abstract electrons from H(2)O, generating O(2) and a proton gradient subsequently used for ATP formation. It consists of a core antenna complex that captures photons, and an electron transfer chain that converts photonic excitation into a charge separation. The D1/D2 (PsbA/PsbD) reaction center heterodimer binds P680, the primary electron donor of PSII as well as several subsequent electron acceptors. D2 is needed for assembly of a stable PSII complex. The protein is Photosystem II D2 protein of Paulinella chromatophora.